A 238-amino-acid chain; its full sequence is 1-(5-phosphoribosyl)-5-[(5-phosphoribosylamino)methylideneamino] imidazole-4-carboxamide isomerase (238 aa).

The active-site Proton acceptor is Asp7. The active-site Proton donor is the Asp129.

It belongs to the HisA/HisF family.

Its subcellular location is the cytoplasm. It carries out the reaction 1-(5-phospho-beta-D-ribosyl)-5-[(5-phospho-beta-D-ribosylamino)methylideneamino]imidazole-4-carboxamide = 5-[(5-phospho-1-deoxy-D-ribulos-1-ylimino)methylamino]-1-(5-phospho-beta-D-ribosyl)imidazole-4-carboxamide. It functions in the pathway amino-acid biosynthesis; L-histidine biosynthesis; L-histidine from 5-phospho-alpha-D-ribose 1-diphosphate: step 4/9. The protein is 1-(5-phosphoribosyl)-5-[(5-phosphoribosylamino)methylideneamino] imidazole-4-carboxamide isomerase of Leuconostoc mesenteroides subsp. mesenteroides (strain ATCC 8293 / DSM 20343 / BCRC 11652 / CCM 1803 / JCM 6124 / NCDO 523 / NBRC 100496 / NCIMB 8023 / NCTC 12954 / NRRL B-1118 / 37Y).